Reading from the N-terminus, the 188-residue chain is SAYSvFN domain-containing protein 1 (188 aa).

The span at 1-10 shows a compositional bias: basic and acidic residues; that stretch reads MEQRLAEFRE. Disordered regions lie at residues 1–43 and 60–80; these read MEQR…ATPK and AIAQAQPNQPQEAGQQLPEST. Topologically, residues 1-100 are cytoplasmic; sequence MEQRLAEFRE…SFLTNITFLK (100 aa). 2 stretches are compositionally biased toward low complexity: residues 22 to 43 and 60 to 75; these read STSSQSVQTSGAKAEPAAATPK and AIAQAQPNQPQEAGQQ. Positions 86–100 are middle helical (MH); that stretch reads SSCRQSFLTNITFLK. An intramembrane region (helical) is located at residues 101-121; that stretch reads VLLWLVLLGLFVELEFGLAYF. Over 122 to 188 the chain is Cytoplasmic; sequence VLSMFYWMYV…RTSPSCSSYP (67 aa).

Belongs to the SAYSD1 family. In terms of assembly, associates (via N-terminus) with ribosomes. As to expression, enriched in testis; predominantly expressed in round and elongating spermatids.

The protein localises to the endoplasmic reticulum membrane. It is found in the cytoplasmic vesicle membrane. In terms of biological role, ufmylation 'reader' component of a translocation-associated quality control pathway, a mechanism that takes place when a ribosome has stalled during translation, and which is required to degrade clogged substrates. Specifically recognizes and binds ufmylated ribosomes when a ribosome has stalled, promoting the transport of stalled nascent chain via the TRAPP complex to lysosomes for degradation. The protein is SAYSvFN domain-containing protein 1 of Mus musculus (Mouse).